The following is a 1056-amino-acid chain: Pleckstrin homology domain-containing family M member 1 (1056 aa).

One can recognise an RUN domain in the interval 41 to 183 (TSEDGDANTM…LSFELSYKSA (143 aa)). 3 disordered regions span residues 215–245 (QRKE…RRNQ), 277–303 (GSKS…EDSD), and 360–422 (PAQA…QAHD). Ser-219 is modified (phosphoserine). Residues 389–404 (PVESTSGQQPSSTVSE) are compositionally biased toward polar residues. Phosphoserine occurs at positions 432 and 435. Residues 451–483 (SREQPLESASDHPIASYRGTPGSRPGLHRHFSQ) are disordered. Ser-490 is modified (phosphoserine). A PH 1 domain is found at 534-625 (GLMKLGTVER…WLDRVREALQ (92 aa)). The LIR motif lies at 632 to 638 (EDEWVNV). An interaction with RAB7A region spans residues 654–1056 (CLSPSDLLSE…RKYQEQNIFA (403 aa)). A PH 2 domain is found at 683–777 (DAIKESLLYL…WRDLVRKVLA (95 aa)). A Phorbol-ester/DAG-type zinc finger spans residues 986 to 1040 (QHVYHCDLCTQRGFICQICQHHDIIFPFEFDTTVRCAECKTVFHQSCQAVVKKGC).

As to quaternary structure, interacts (via N- and C-terminus) with RAB7A (GTP-bound form). Simultaneously interacts with RAB7A and ARL8B; bringing about clustering and fusion of late endosomes and lysosomes. Interacts (via RUN domain) with ARL8B (GTP-bound form); the interaction is required for PLEKHM1 localization to lysosomes and for ARL8B function in delivery and degradation of endocytic and autophagic cargo in lysosomes. PLEKHM1 and PLEKHM2 compete for interaction with ARL8B. Interacts with ARL8A; the interaction is weaker than with ARL8B. Interacts with VPS41, VPS11, VPS18, VPS33A and VPS39; indicative for an association with the HOPS complex; the interactions with, at least, VPS41, VPS11, VPS18 and VPS33A require ARL8B. Interacts with GABARAP, GABARAPL, GABARAPL2, MAP1LC3A, MAP1LC3B and MAP1LC3C. Interacts with PAFAH1B. Interacts (via N- and C-terminus) with NDEL1. Interacts (via C-terminus) with MAP3K7. Interacts (via N- and C-terminus) with FAM98A. Interacts (via C-terminus) with DEF8; this interaction is weak but increased in a RAB7A-dependent manner. In colon carcinoma and breast carcinoma cells, it interacts with sialyl-lex-positive protein. In terms of assembly, (Microbial infection) Interacts with Salmonella typhimurium sifA. As to expression, expressed in placenta, liver, prostate, thymus, spleen, ovary, colon, colon carcinoma and peripheral blood lymphocytes (PBL). Weakly expressed in brain, lung, kidney, and testis. No expression in heart, skeletal muscle, pancreas and small intestine. Predominantly expressed in the breast carcinoma cell line MCF-7.

The protein localises to the autolysosome membrane. Its subcellular location is the endosome membrane. The protein resides in the late endosome membrane. It localises to the lysosome membrane. In terms of biological role, acts as a multivalent adapter protein that regulates Rab7-dependent and HOPS complex-dependent fusion events in the endolysosomal system and couples autophagic and the endocytic trafficking pathways. Acts as a dual effector of RAB7A and ARL8B that simultaneously binds these GTPases, bringing about clustering and fusion of late endosomes and lysosomes. Required for late stages of endolysosomal maturation, facilitating both endocytosis-mediated degradation of growth factor receptors and autophagosome clearance. Interaction with Arl8b is a crucial factor in the terminal maturation of autophagosomes and to mediate autophagosome-lysosome fusion. Positively regulates lysosome peripheral distribution and ruffled border formation in osteoclasts. May be involved in negative regulation of endocytic transport from early endosome to late endosome/lysosome implicating its association with Rab7. May have a role in sialyl-lex-mediated transduction of apoptotic signals. Involved in bone resorption. Functionally, (Microbial infection) In case of infection contributes to Salmonella typhimurium pathogenesis by supporting the integrity of the Salmonella-containing vacuole (SCV) probably in concert with the HOPS complex and Rab7. The sequence is that of Pleckstrin homology domain-containing family M member 1 from Homo sapiens (Human).